Consider the following 427-residue polypeptide: 5-hydroxybenzimidazole synthase BzaA (427 aa).

It belongs to the ThiC family. 5-hydroxybenzimidazole synthase subfamily. Requires [4Fe-4S] cluster as cofactor.

It catalyses the reaction 5-amino-1-(5-phospho-beta-D-ribosyl)imidazole + AH2 + S-adenosyl-L-methionine = 5-hydroxybenzimidazole + 5'-deoxyadenosine + formate + L-methionine + A + NH4(+) + phosphate + 2 H(+). Its pathway is cofactor biosynthesis; adenosylcobalamin biosynthesis. Together with BzaB, catalyzes the conversion of aminoimidazole ribotide (AIR) to 5-hydroxybenzimidazole (5-HBI) in a radical S-adenosyl-L-methionine (SAM)-dependent reaction. Is thus involved in the anaerobic biosynthesis of dimethylbenzimidazole (DMB), the lower axial ligand of vitamin B12 (cobalamin). Requires BzaB for catalytic activity, as BzaA alone displays no activity. The protein is 5-hydroxybenzimidazole synthase BzaA of Eubacterium limosum.